The chain runs to 833 residues: ERAD-associated E3 ubiquitin-protein ligase component HRD3 (833 aa).

Positions Met1–Ala20 are cleaved as a signal peptide. Residues Asn101, Asn123, and Asn142 are each glycosylated (N-linked (GlcNAc...) asparagine). One copy of the Sel1-like 1 repeat lies at Ser103 to His139. Sel1-like repeat units follow at residues His143–Asn186, Leu187–Arg222, Gly413–Ala445, Glu552–Asn595, Ile596–Ser627, and Ile628–His663. Residue Asn429 is glycosylated (N-linked (GlcNAc...) asparagine). Asn611 carries an N-linked (GlcNAc...) asparagine glycan. A helical membrane pass occupies residues Leu768–Ala788. The disordered stretch occupies residues Asn805–Trp824. Low complexity predominate over residues Gln809–Gln819.

Belongs to the sel-1 family. In terms of assembly, component of the HRD1 ubiquitin ligase complex which contains the E3 ligase HRD1, its cofactors HRD3, USA1 and DER1, substrate recruiting factor YOS9 and CDC48-binding protein UBX2. Within the complex, interacts directly with HRD1 and YOS9 (via N-terminus). In ERAD-L, HRD3 and YOS9 jointly bind misfolded glycoproteins in the endoplasmic reticulum (ER) lumen. Movement of ERAD-L substrates through the ER membrane is facilitated by HRD1 and DER1 which have lateral gates facing each other and which distort the membrane region between the lateral gates, making it much thinner than a normal phospholipid bilayer. Substrates insert into the membrane as a hairpin loop with one strand interacting with DER1 and the other with HRD1. The HRD1 complex interacts with the heterotrimeric CDC48-NPL4-UFD1 ATPase complex which is recruited by UBX2 via its interaction with CDC48 and which moves ubiquitinated substrates to the cytosol for targeting to the proteasome. The HRD1 complex interacts with the ERAD substrates HMG1 and HMG2. Interacts with KAR2.

Its subcellular location is the endoplasmic reticulum membrane. Component of the endoplasmic reticulum quality control (ERQC) system involved in ubiquitin-dependent degradation of misfolded endoplasmic reticulum proteins. Component of the HRD1 ubiquitin ligase complex, which is part of the ERAD-L and ERAD-M pathways responsible for the rapid degradation of soluble lumenal and membrane proteins with misfolded lumenal domains (ERAD-L), or ER-membrane proteins with misfolded transmembrane domains (ERAD-M). ERAD-L substrates are ubiquitinated through HRD1 in conjunction with the E2 ubiquitin-conjugating enzymes UBC1 and UBC7-CUE1. Ubiquitinated substrates are then removed to the cytosol via the action of the CDC48-NPL4-UFD1 ATPase complex and targeted to the proteasome. ERAD-M substrates are processed by the same HRD1-HRD3 core complex, but only a subset of the other components is required for ERAD-M. Stabilizes the HRD1 ubiquitin-protein ligase. Also functions in recruiting misfolded protein substrates in conjunction with YOS9. The protein is ERAD-associated E3 ubiquitin-protein ligase component HRD3 (HRD3) of Saccharomyces cerevisiae (strain ATCC 204508 / S288c) (Baker's yeast).